The following is a 309-amino-acid chain: Porphobilinogen deaminase (309 aa).

The residue at position 234 (cysteine 234) is an S-(dipyrrolylmethanemethyl)cysteine.

It belongs to the HMBS family. As to quaternary structure, monomer. Dipyrromethane serves as cofactor.

The catalysed reaction is 4 porphobilinogen + H2O = hydroxymethylbilane + 4 NH4(+). It functions in the pathway porphyrin-containing compound metabolism; protoporphyrin-IX biosynthesis; coproporphyrinogen-III from 5-aminolevulinate: step 2/4. Tetrapolymerization of the monopyrrole PBG into the hydroxymethylbilane pre-uroporphyrinogen in several discrete steps. The polypeptide is Porphobilinogen deaminase (hemC) (Mycobacterium bovis (strain ATCC BAA-935 / AF2122/97)).